The following is a 171-amino-acid chain: Small ribosomal subunit protein uS5 (171 aa).

The region spanning 13-76 (FLERLVAVNR…DQAKKNLVTI (64 aa)) is the S5 DRBM domain.

It belongs to the universal ribosomal protein uS5 family. As to quaternary structure, part of the 30S ribosomal subunit. Contacts proteins S4 and S8.

In terms of biological role, with S4 and S12 plays an important role in translational accuracy. Functionally, located at the back of the 30S subunit body where it stabilizes the conformation of the head with respect to the body. This Dichelobacter nodosus (strain VCS1703A) protein is Small ribosomal subunit protein uS5.